A 695-amino-acid polypeptide reads, in one-letter code: Testis-specific Y-encoded-like protein 2 (695 aa).

The disordered stretch occupies residues 1 to 56 (MDRPDEGPPAKTRRLSSSESPQRDPPPPPPPPPLLRLPLPPPQQRPRLQEETEAAQ). A Glycyl lysine isopeptide (Lys-Gly) (interchain with G-Cter in SUMO2) cross-link involves residue lysine 11. Residues serine 18 and serine 20 each carry the phosphoserine modification. A compositionally biased stretch (pro residues) spans 23 to 44 (RDPPPPPPPPPLLRLPLPPPQQ). Residues lysine 163 and lysine 165 each participate in a glycyl lysine isopeptide (Lys-Gly) (interchain with G-Cter in SUMO2) cross-link. The interval 175-207 (EDEDEQESMRSSRRRRRRRRRKQRKVKRESRQR) is disordered. The segment covering 185-202 (SSRRRRRRRRRKQRKVKR) has biased composition (basic residues). Residue threonine 340 is modified to Phosphothreonine. Disordered regions lie at residues 471 to 603 (DINE…RDIE) and 632 to 695 (VEEE…GKTG). Residues 481–491 (SPDHDEVRNET) show a composition bias toward basic and acidic residues. A compositionally biased stretch (acidic residues) spans 496–518 (ESADDNETTDNNESADDNNENPE). Residues 519–535 (DNNKNADDNKENPDNNK) are compositionally biased toward basic and acidic residues. The segment covering 539–557 (GNNFFNGGFWGSHGNNQDS) has biased composition (low complexity). Acidic residues-rich tracts occupy residues 558–601 (SDSD…DDRD) and 632–677 (VEEE…DLED). Phosphoserine is present on residues serine 670 and serine 673.

This sequence belongs to the nucleosome assembly protein (NAP) family. In terms of assembly, interacts with histones. Interacts with CASK. Part of a complex containing CASK, TBR1 and TSPYL2. Post-translationally, phosphorylation at Ser-20 and/or Thr-340 impairs function on cell proliferation. Ubiquitously expressed, with highest levels in testis, adrenal gland, cerebral cortex, ovary, skeletal muscle and spleen. Present in testis, adrenal gland, cerebral cortex and ovary (at protein level).

The protein localises to the nucleus. The protein resides in the cytoplasm. Part of the CASK/TBR1/TSPYL2 transcriptional complex which modulates gene expression in response to neuronal synaptic activity, probably by facilitating nucleosome assembly. May inhibit cell proliferation by inducing p53-dependent CDKN1A expression. The polypeptide is Testis-specific Y-encoded-like protein 2 (TSPYL2) (Macaca fascicularis (Crab-eating macaque)).